Here is a 445-residue protein sequence, read N- to C-terminus: METIFAQSSAFGKAGVAVFRISGPKSLEVLQLLTGRKDFKSRLMYYQQITFPESGELIDNAMVVYFKSPGSFTGEDVAEIYTHGSKAISIMLINALLNIPNIRLAEAGEFTKRAFLNNKFDLTAAEGIADLINAETIMQHRQAIRQAGGALEELYNNWREQLLQIISLLEAYIDFPDEDIPDSILNKVNNTHTNLINEISNYLNDNRRGELLNSGLKLAIIGPPNAGKSSLLNFLMQRDIAIVSNIAGTTRDIIEGHLDIGGYPIILQDTAGIREESSDIIEQEGIKRAINSAKTADIKIIMFDAEKLDSSINEGIIDLIDENTIIIINKIDLIEPSKIFLIEDKYKCLRVSIKNNIALNDILKNIENIAENMAGFTETPYITNQRHRHYLKQGLTYLKNFTLDNDLVLATEDIRMTVRCIGTITGVINVNEILGEIFKNFCIGK.

Arg20, Glu79, and Lys119 together coordinate (6S)-5-formyl-5,6,7,8-tetrahydrofolate. The 157-residue stretch at 215 to 371 (GLKLAIIGPP…ILKNIENIAE (157 aa)) folds into the TrmE-type G domain. Asn225 is a binding site for K(+). Residues 225-230 (NAGKSS), 244-250 (SNIAGTT), and 269-272 (DTAG) contribute to the GTP site. Ser229 is a binding site for Mg(2+). 3 residues coordinate K(+): Ser244, Ile246, and Thr249. Thr250 lines the Mg(2+) pocket. A (6S)-5-formyl-5,6,7,8-tetrahydrofolate-binding site is contributed by Lys445.

The protein belongs to the TRAFAC class TrmE-Era-EngA-EngB-Septin-like GTPase superfamily. TrmE GTPase family. As to quaternary structure, homodimer. Heterotetramer of two MnmE and two MnmG subunits. K(+) is required as a cofactor.

Its subcellular location is the cytoplasm. Its function is as follows. Exhibits a very high intrinsic GTPase hydrolysis rate. Involved in the addition of a carboxymethylaminomethyl (cmnm) group at the wobble position (U34) of certain tRNAs, forming tRNA-cmnm(5)s(2)U34. The chain is tRNA modification GTPase MnmE from Rickettsia canadensis (strain McKiel).